The chain runs to 868 residues: DNA mismatch repair protein MutS (868 aa).

620 to 627 (GPNMGGKS) is an ATP binding site.

Belongs to the DNA mismatch repair MutS family.

This protein is involved in the repair of mismatches in DNA. It is possible that it carries out the mismatch recognition step. This protein has a weak ATPase activity. This Xylella fastidiosa (strain 9a5c) protein is DNA mismatch repair protein MutS.